The chain runs to 391 residues: Protein CAJ1 (391 aa).

Positions 4–73 (ETEYYDILGI…RSKYDQFGKE (70 aa)) constitute a J domain. The tract at residues 119–161 (KEDEEGTAATETEKADESTDGGMVKHDTNKAESLKKDKLSKEQ) is disordered. Residues 129 to 161 (ETEKADESTDGGMVKHDTNKAESLKKDKLSKEQ) show a composition bias toward basic and acidic residues. K132 participates in a covalent cross-link: Glycyl lysine isopeptide (Lys-Gly) (interchain with G-Cter in ubiquitin).

This chain is Protein CAJ1 (CAJ1), found in Saccharomyces cerevisiae (strain ATCC 204508 / S288c) (Baker's yeast).